A 248-amino-acid polypeptide reads, in one-letter code: Triosephosphate isomerase (248 aa).

At Thr-4 the chain carries Phosphothreonine. Substrate-binding residues include Asn-10 and Lys-12. A Phosphoserine modification is found at Ser-71. Residue His-95 is the Electrophile of the active site. Glu-165 acts as the Proton acceptor in catalysis. Ser-215 is modified (phosphoserine). Residue Lys-223 forms a Glycyl lysine isopeptide (Lys-Gly) (interchain with G-Cter in ubiquitin) linkage.

The protein belongs to the triosephosphate isomerase family. In terms of assembly, homodimer.

The enzyme catalyses D-glyceraldehyde 3-phosphate = dihydroxyacetone phosphate. The protein operates within carbohydrate biosynthesis; gluconeogenesis. Its pathway is carbohydrate degradation; glycolysis; D-glyceraldehyde 3-phosphate from glycerone phosphate: step 1/1. The protein is Triosephosphate isomerase (TPI1) of Saccharomyces cerevisiae (strain ATCC 204508 / S288c) (Baker's yeast).